We begin with the raw amino-acid sequence, 739 residues long: Prestin (739 aa).

Over 1–76 the chain is Cytoplasmic; the sequence is MEHVTVSEEP…PILTWLPSYP (76 aa). Residues 77 to 106 form a helical membrane-spanning segment; sequence LKEYLFGDIVSGISTGVMQLPQGLAYAMLA. The Extracellular segment spans residues 107–109; the sequence is AVP. A helical transmembrane segment spans residues 110-127; the sequence is PVFGLYSSFYPVLLYTFF. At 128 to 138 the chain is on the cytoplasmic side; the sequence is GTSKHISIGTF. A helical transmembrane segment spans residues 139 to 152; that stretch reads AVISLMIGGVAVRE. The Extracellular segment spans residues 153–169; sequence APDSMFMVNGTNSSLVV. N-linked (GlcNAc...) asparagine glycans are attached at residues N161 and N164. A helical membrane pass occupies residues 170 to 199; it reads NIEARDSRRVEVVVALTTLVGIIQFVLGLL. The Cytoplasmic portion of the chain corresponds to 200 to 209; sequence RFGFLAIYLT. A helical membrane pass occupies residues 210–233; sequence EPLVRGFTTAAAVHVSVSQLKYLL. Over 234–244 the chain is Extracellular; that stretch reads GVKTARFNGPL. Residues 245–256 constitute an intramembrane region (helical); the sequence is SVVYSLDAVLRN. Over 257–261 the chain is Extracellular; the sequence is IADTN. A helical transmembrane segment spans residues 262-285; sequence IVTLIIGLGCTVFLYIIKQLNERF. Residues 286-294 are Cytoplasmic-facing; that stretch reads KKKLLIPIP. The helical transmembrane segment at 295-310 threads the bilayer; sequence GEIIVVIVSTGISYGM. Residues 311 to 335 lie on the Extracellular side of the membrane; the sequence is LMSENYGVDVVGKIPTGLLPPKVPD. The helical transmembrane segment at 336 to 370 threads the bilayer; it reads FSVFPNLFADAVPIAVVGFSITISLAKTFALKYGY. Residues 371–373 are Cytoplasmic-facing; that stretch reads SVD. A helical membrane pass occupies residues 374-391; sequence GNQELIALGLCNFVSSFF. The Extracellular segment spans residues 392-399; that stretch reads HTFVVTAS. A helical transmembrane segment spans residues 400 to 409; sequence MSRSLVQEST. S401 serves as a coordination point for salicylate. Residues 410–413 lie on the Cytoplasmic side of the membrane; it reads GGHT. A helical membrane pass occupies residues 414–435; sequence EIAGLLASLLVLLVVVAIGFVF. Residues 436 to 439 are Extracellular-facing; sequence QPLP. The chain crosses the membrane as a helical span at residues 440–467; the sequence is TTVLAAIIMVNLLGMFKQTRDIPVLWRK. A topological domain (cytoplasmic) is located at residue S468. A helical membrane pass occupies residues 469–484; it reads KIELAIWLVSFFASVL. The Extracellular portion of the chain corresponds to 485-486; the sequence is LG. The chain crosses the membrane as a helical span at residues 487–507; sequence LDYGLAVAMAFAILTVIYRTQ. The tract at residues 508–731 is extended region for STAS domain; it reads RPKNVVLGQI…AVLQCKRWRD (224 aa). Topologically, residues 508–739 are cytoplasmic; that stretch reads RPKNVVLGQI…RDLPVHPNIH (232 aa). An STAS domain is found at 528-726; the sequence is EYEEAEECSG…PTIHDAVLQC (199 aa).

It belongs to the SLC26A/SulP transporter (TC 2.A.53) family. In terms of assembly, homodimer. Interacts (via STAS domain) with CALM; this interaction is calcium-dependent. As to expression, expressed in hair cells of the auditory organs.

It localises to the cell membrane. The enzyme catalyses oxalate(in) + chloride(out) = oxalate(out) + chloride(in). It carries out the reaction sulfate(out) + chloride(in) = sulfate(in) + chloride(out). With respect to regulation, sulfate/chloride antiport activity is inhibited by salicylate; this inhibition is reversible. In terms of biological role, electrogenic antiporter that exchanges sulfate or oxalate for chloride ion in a strictly coupled manner with a 1:1 stoichiometry. Adopts a dynamic conformation, which alternates between the exposure of the central binding site to the extra- and intracellular solutions leading to an inward-to-outward conformational transition during the transport cycle. Generates voltage-dependent charge movements resembling to the non-linear capacitance (NLC) of the cell membrane, but which are not associated to electromotile activity. The protein is Prestin of Danio rerio (Zebrafish).